Reading from the N-terminus, the 431-residue chain is L-lysine N6-monooxygenase MbtG (431 aa).

Positions 1–21 are cleaved as a signal peptide; sequence MNPTLAVLGAGAKAVAVAAKA.

Belongs to the lysine N(6)-hydroxylase/L-ornithine N(5)-oxygenase family. Requires FAD as cofactor.

The enzyme catalyses L-lysine + NADPH + O2 = N(6)-hydroxy-L-lysine + NADP(+) + H2O. Its pathway is siderophore biosynthesis; mycobactin biosynthesis. Its function is as follows. Flavoprotein monooxygenase required for N-hydroxylation of the two acylated lysine residues during mycobactin assembly, thus producing the hydroxamate groups necessary for iron sequestration. Is also able, but less efficiently, to hydroxylate L-lysine (non acylated) in vitro. In Mycobacterium bovis (strain ATCC BAA-935 / AF2122/97), this protein is L-lysine N6-monooxygenase MbtG (mbtG).